The chain runs to 92 residues: Small ribosomal subunit protein uS19 (92 aa).

Belongs to the universal ribosomal protein uS19 family.

Its function is as follows. Protein S19 forms a complex with S13 that binds strongly to the 16S ribosomal RNA. This Gloeothece citriformis (strain PCC 7424) (Cyanothece sp. (strain PCC 7424)) protein is Small ribosomal subunit protein uS19.